Reading from the N-terminus, the 330-residue chain is D-cysteine desulfhydrase (330 aa).

The residue at position 52 (Lys52) is an N6-(pyridoxal phosphate)lysine.

This sequence belongs to the ACC deaminase/D-cysteine desulfhydrase family. In terms of assembly, homodimer. Pyridoxal 5'-phosphate serves as cofactor.

It catalyses the reaction D-cysteine + H2O = hydrogen sulfide + pyruvate + NH4(+) + H(+). Functionally, catalyzes the alpha,beta-elimination reaction of D-cysteine and of several D-cysteine derivatives. It could be a defense mechanism against D-cysteine. The protein is D-cysteine desulfhydrase of Yersinia pestis.